The chain runs to 194 residues: Peptidyl-tRNA hydrolase (194 aa).

Tyrosine 16 serves as a coordination point for tRNA. Histidine 21 functions as the Proton acceptor in the catalytic mechanism. TRNA-binding residues include phenylalanine 66, asparagine 68, and asparagine 114.

The protein belongs to the PTH family. In terms of assembly, monomer.

The protein resides in the cytoplasm. It catalyses the reaction an N-acyl-L-alpha-aminoacyl-tRNA + H2O = an N-acyl-L-amino acid + a tRNA + H(+). Functionally, hydrolyzes ribosome-free peptidyl-tRNAs (with 1 or more amino acids incorporated), which drop off the ribosome during protein synthesis, or as a result of ribosome stalling. In terms of biological role, catalyzes the release of premature peptidyl moieties from peptidyl-tRNA molecules trapped in stalled 50S ribosomal subunits, and thus maintains levels of free tRNAs and 50S ribosomes. This is Peptidyl-tRNA hydrolase from Geobacter metallireducens (strain ATCC 53774 / DSM 7210 / GS-15).